We begin with the raw amino-acid sequence, 248 residues long: Cytochrome c oxidase subunit 2 (248 aa).

Positions 1 to 12 are cleaved as a signal peptide; the sequence is MLLMNLFTIINN. The Mitochondrial intermembrane portion of the chain corresponds to 13–39; sequence DVPTPYNMYFQDSTTPHQEGILELHDN. The helical transmembrane segment at 40-61 threads the bilayer; sequence IMFYMLTVLGLVSWMMIIIIKD. The Mitochondrial matrix portion of the chain corresponds to 62-79; the sequence is YKNNPITYKYIKHGQMIE. The helical transmembrane segment at 80–104 threads the bilayer; that stretch reads IIWTILPAIILLMIAFPSFILLYLC. At 105–248 the chain is on the mitochondrial intermembrane side; the sequence is DEVISPAMTI…PTFLTWLNEQ (144 aa). Cu cation contacts are provided by His183, Cys218, Glu220, Cys222, His226, and Met229. Mg(2+) is bound at residue Glu220.

It belongs to the cytochrome c oxidase subunit 2 family. In terms of assembly, component of the cytochrome c oxidase (complex IV, CIV), a multisubunit enzyme composed of a catalytic core of 3 subunits and several supernumerary subunits. The complex exists as a monomer or a dimer and forms supercomplexes (SCs) in the inner mitochondrial membrane with ubiquinol-cytochrome c oxidoreductase (cytochrome b-c1 complex, complex III, CIII). The cofactor is Cu cation. In terms of processing, the signal sequence of COX2 is processed by IMP1.

It is found in the mitochondrion inner membrane. It catalyses the reaction 4 Fe(II)-[cytochrome c] + O2 + 8 H(+)(in) = 4 Fe(III)-[cytochrome c] + 2 H2O + 4 H(+)(out). In terms of biological role, component of the cytochrome c oxidase, the last enzyme in the mitochondrial electron transport chain which drives oxidative phosphorylation. The respiratory chain contains 3 multisubunit complexes succinate dehydrogenase (complex II, CII), ubiquinol-cytochrome c oxidoreductase (cytochrome b-c1 complex, complex III, CIII) and cytochrome c oxidase (complex IV, CIV), that cooperate to transfer electrons derived from NADH and succinate to molecular oxygen, creating an electrochemical gradient over the inner membrane that drives transmembrane transport and the ATP synthase. Cytochrome c oxidase is the component of the respiratory chain that catalyzes the reduction of oxygen to water. Electrons originating from reduced cytochrome c in the intermembrane space (IMS) are transferred via the dinuclear copper A center (CU(A)) of subunit 2 and heme A of subunit 1 to the active site in subunit 1, a binuclear center (BNC) formed by heme A3 and copper B (CU(B)). The BNC reduces molecular oxygen to 2 water molecules using 4 electrons from cytochrome c in the IMS and 4 protons from the mitochondrial matrix. The sequence is that of Cytochrome c oxidase subunit 2 (COX2) from Eremothecium gossypii (strain ATCC 10895 / CBS 109.51 / FGSC 9923 / NRRL Y-1056) (Yeast).